We begin with the raw amino-acid sequence, 188 residues long: Small ribosomal subunit protein uS7 (188 aa).

It belongs to the universal ribosomal protein uS7 family. Part of the 30S ribosomal subunit.

One of the primary rRNA binding proteins, it binds directly to 16S rRNA where it nucleates assembly of the head domain of the 30S subunit. Is located at the subunit interface close to the decoding center. This is Small ribosomal subunit protein uS7 from Methanococcus maripaludis (strain C7 / ATCC BAA-1331).